Here is a 266-residue protein sequence, read N- to C-terminus: Glucosamine-6-phosphate deaminase (266 aa).

Asp-72 (proton acceptor; for enolization step) is an active-site residue. Asp-141 (for ring-opening step) is an active-site residue. The active-site Proton acceptor; for ring-opening step is His-143. Catalysis depends on Glu-148, which acts as the For ring-opening step.

Belongs to the glucosamine/galactosamine-6-phosphate isomerase family. NagB subfamily. Homohexamer.

It catalyses the reaction alpha-D-glucosamine 6-phosphate + H2O = beta-D-fructose 6-phosphate + NH4(+). It functions in the pathway amino-sugar metabolism; N-acetylneuraminate degradation; D-fructose 6-phosphate from N-acetylneuraminate: step 5/5. With respect to regulation, allosterically activated by N-acetylglucosamine 6-phosphate (GlcNAc6P). Its function is as follows. Catalyzes the reversible isomerization-deamination of glucosamine 6-phosphate (GlcN6P) to form fructose 6-phosphate (Fru6P) and ammonium ion. The sequence is that of Glucosamine-6-phosphate deaminase from Salmonella arizonae (strain ATCC BAA-731 / CDC346-86 / RSK2980).